The sequence spans 555 residues: Potassium-transporting ATPase potassium-binding subunit (555 aa).

Transmembrane regions (helical) follow at residues 2–22, 60–80, 130–150, 173–193, 246–266, 278–298, 374–394, 412–432, 483–503, and 525–545; these read IWVAVVITMLLFILVAKPTGI, QYALSLVLLNGFMIVVVYFIF, IGITFLMFAAPATTLALVMAF, VFLPIAFIAALVFVALGVPQT, MSNILQMMLMMLLPTALPFTY, ILFVSLFMVFLLGFITITTSE, AGFVNIIMYAIIAVFISGLMV, LIAVTILFHPLLILGFSALAL, LVMFLGRYFSLITMLAVAASL, and GIFIGTIVIVGALTFFPMLVL.

It belongs to the KdpA family. As to quaternary structure, the system is composed of three essential subunits: KdpA, KdpB and KdpC.

The protein localises to the cell membrane. In terms of biological role, part of the high-affinity ATP-driven potassium transport (or Kdp) system, which catalyzes the hydrolysis of ATP coupled with the electrogenic transport of potassium into the cytoplasm. This subunit binds the extracellular potassium ions and delivers the ions to the membrane domain of KdpB through an intramembrane tunnel. This is Potassium-transporting ATPase potassium-binding subunit from Bacillus cereus (strain 03BB102).